Here is a 36-residue protein sequence, read N- to C-terminus: Adenylate kinase (36 aa).

10–15 (GAGKGT) is an ATP binding site. The NMP stretch occupies residues 30 to 36 (ATGDLFR). Residues Thr-31 and Arg-36 each coordinate AMP.

The protein belongs to the adenylate kinase family. In terms of assembly, monomer.

It localises to the cytoplasm. The enzyme catalyses AMP + ATP = 2 ADP. It functions in the pathway purine metabolism; AMP biosynthesis via salvage pathway; AMP from ADP: step 1/1. In terms of biological role, catalyzes the reversible transfer of the terminal phosphate group between ATP and AMP. Plays an important role in cellular energy homeostasis and in adenine nucleotide metabolism. This Streptomyces griseus protein is Adenylate kinase (adk).